Here is a 372-residue protein sequence, read N- to C-terminus: Spermidine/putrescine import ATP-binding protein PotA (372 aa).

Positions 13-243 constitute an ABC transporter domain; it reads IKLTGISKSF…PKNLFVARFI (231 aa). Residue 45-52 participates in ATP binding; the sequence is GPSGCGKT.

This sequence belongs to the ABC transporter superfamily. Spermidine/putrescine importer (TC 3.A.1.11.1) family. The complex is composed of two ATP-binding proteins (PotA), two transmembrane proteins (PotB and PotC) and a solute-binding protein (PotD).

The protein resides in the cell inner membrane. The enzyme catalyses ATP + H2O + polyamine-[polyamine-binding protein]Side 1 = ADP + phosphate + polyamineSide 2 + [polyamine-binding protein]Side 1.. Functionally, part of the ABC transporter complex PotABCD involved in spermidine/putrescine import. Responsible for energy coupling to the transport system. In Aliivibrio fischeri (strain ATCC 700601 / ES114) (Vibrio fischeri), this protein is Spermidine/putrescine import ATP-binding protein PotA.